The following is a 284-amino-acid chain: Acetyl-coenzyme A carboxylase carboxyl transferase subunit beta (284 aa).

Positions 24–284 constitute a CoA carboxyltransferase N-terminal domain; sequence GLWYKSPTGK…LDLILNNEVR (261 aa).

Belongs to the AccD/PCCB family. In terms of assembly, acetyl-CoA carboxylase is a heterohexamer composed of biotin carboxyl carrier protein (AccB), biotin carboxylase (AccC) and two subunits each of ACCase subunit alpha (AccA) and ACCase subunit beta (AccD).

The protein localises to the cytoplasm. The catalysed reaction is N(6)-carboxybiotinyl-L-lysyl-[protein] + acetyl-CoA = N(6)-biotinyl-L-lysyl-[protein] + malonyl-CoA. The protein operates within lipid metabolism; malonyl-CoA biosynthesis; malonyl-CoA from acetyl-CoA: step 1/1. In terms of biological role, component of the acetyl coenzyme A carboxylase (ACC) complex. Biotin carboxylase (BC) catalyzes the carboxylation of biotin on its carrier protein (BCCP) and then the CO(2) group is transferred by the transcarboxylase to acetyl-CoA to form malonyl-CoA. The protein is Acetyl-coenzyme A carboxylase carboxyl transferase subunit beta of Flavobacterium psychrophilum (strain ATCC 49511 / DSM 21280 / CIP 103535 / JIP02/86).